A 904-amino-acid chain; its full sequence is MNAPASPAVQTYDATGATPVMQQFFEMKARHPDALIFFRMGDFYELFFDDAYKAAAALGISQTFRGTHNGQPIPMAGVPQHAAEAYLSKLIRLGFKVAVCEQMEDPAEARKRGSKSVVRRDIVRVVTPGTLTEDGLLDARGANRLAAVAIRAGQAAVAAVELSTGEVECFLVAKDAVGAILAALAPSETLVADRLLSDDLLAQTLKICGGLIQPMPSALSEPQASETRVKRLYGVDTLDGFGGLSAAEIGALGLIAAHLEMTQAGKLPALRAPRRAAEADVMSIDPATRSSLEIDRAQNGDRSGSLLAAIDRTVTAGGARMLASRLARPLLDPHAIDARLDAVEWFVDHRGLRERLREVLKGAGDMARALSRLALGRGGPRDLGCLKDGLKTGEKLAGMVGGSGDPLSPPPAQLEGALKALTPSLQEGLSRLLAQLETGLGPDLPALARDGGYVAAGVRPELDQARALRDDSRRVVAALESRLIQESGVPLKIRHNGVLGYFVEATAGKADPLFQPPLNATFIHRQTLANQVRFTTVELADLDARIAQAAERALAMEVAAFEDWRAEAVALAEPIQLAAEALAKLDVAAALAEWAEDAGAVRPSVDKSLAFEARAARHPVVEAAVKRAGDPYTPNDCCLDAAGERGARLSIVTGPNMAGKSTFLRQNAILAILAQSGCYVPAKSLRLGVIDRLFSRVGAGDDLARGRSTFMMEMVETAAILTQASPRSLVILDEIGRGTATYDGLAIAWACAEALHDTNRCRALFATHYHELATLETRLAHVSNLSLRAKEWNGDLVFLHEAAAGPADRSYGVQVAKLAGVPPAVVARAKEVLDRLESKTESPARLDDLPLFASHAPGPLNQFGAPVQAAPSRTDAALGDLDVDGMSPREALDALYRLKALLKT.

An ATP-binding site is contributed by 654 to 661 (GPNMAGKS).

Belongs to the DNA mismatch repair MutS family.

Functionally, this protein is involved in the repair of mismatches in DNA. It is possible that it carries out the mismatch recognition step. This protein has a weak ATPase activity. This is DNA mismatch repair protein MutS from Caulobacter sp. (strain K31).